The sequence spans 371 residues: Transmembrane protein 229A (371 aa).

A disordered region spans residues Met1–Gln30. The next 6 helical transmembrane spans lie at Leu51–Val71, Ala117–Gly137, Phe235–Val255, Leu269–Leu289, Val301–Met321, and Leu334–Tyr354.

It belongs to the TMEM229 family.

It is found in the membrane. This Mus musculus (Mouse) protein is Transmembrane protein 229A (Tmem229a).